A 116-amino-acid chain; its full sequence is RNA guanine-N7 methyltransferase activating subunit (116 aa).

Residues 1 to 55 (MAEALGAQELYEKMFEQRFTANDKEYQEYLKREQDQPPIVEDWKMGNQRNTDRYR) form an interaction with RNMT region. Residues 31-116 (KREQDQPPIV…SNQRFHSDRY (86 aa)) are disordered. Positions 36 to 42 (QPPIVED) match the RNMT-activating domain motif. An RNA-binding region spans residues 56–116 (DNRHHRGWDG…SNQRFHSDRY (61 aa)). Positions 67–78 (QNWSSNSYNQSY) are enriched in low complexity. The span at 97-110 (YQQGHYTHNPSNQR) shows a compositional bias: polar residues.

It belongs to the RAM family.

It localises to the nucleus. Regulatory subunit of the mRNA-capping methyltransferase RNMT:RAMAC complex that methylates the N7 position of the added guanosine to the 5'-cap structure of mRNAs. Promotes the recruitment of the methyl donor, S-adenosyl-L-methionine, to RNMT. Regulates RNMT expression by a post-transcriptional stabilizing mechanism. Binds RNA. In Xenopus tropicalis (Western clawed frog), this protein is RNA guanine-N7 methyltransferase activating subunit (ramac).